Here is a 158-residue protein sequence, read N- to C-terminus: Sec-independent protein translocase protein TatB (158 aa).

Residues 1-21 (MFDIGWSELLVIGVVALVVVG) form a helical membrane-spanning segment. The interval 73–158 (RSMGLDAMKQ…PAPAEPKSNA (86 aa)) is disordered. Residues 83-92 (AADRFEKWDP) show a composition bias toward basic and acidic residues. 2 stretches are compositionally biased toward low complexity: residues 94-132 (KPQQ…SEPA) and 138-158 (APAA…KSNA).

This sequence belongs to the TatB family. The Tat system comprises two distinct complexes: a TatABC complex, containing multiple copies of TatA, TatB and TatC subunits, and a separate TatA complex, containing only TatA subunits. Substrates initially bind to the TatABC complex, which probably triggers association of the separate TatA complex to form the active translocon.

Its subcellular location is the cell inner membrane. Functionally, part of the twin-arginine translocation (Tat) system that transports large folded proteins containing a characteristic twin-arginine motif in their signal peptide across membranes. Together with TatC, TatB is part of a receptor directly interacting with Tat signal peptides. TatB may form an oligomeric binding site that transiently accommodates folded Tat precursor proteins before their translocation. This Cereibacter sphaeroides (strain ATCC 17029 / ATH 2.4.9) (Rhodobacter sphaeroides) protein is Sec-independent protein translocase protein TatB.